Here is a 142-residue protein sequence, read N- to C-terminus: Deoxyuridine 5'-triphosphate nucleotidohydrolase (142 aa).

Substrate contacts are provided by residues Arg62–Gly64, Asn75, Thr79–Asp81, and Lys89.

It belongs to the dUTPase family. It depends on Mg(2+) as a cofactor.

The enzyme catalyses dUTP + H2O = dUMP + diphosphate + H(+). It functions in the pathway pyrimidine metabolism; dUMP biosynthesis; dUMP from dCTP (dUTP route): step 2/2. This enzyme is involved in nucleotide metabolism: it produces dUMP, the immediate precursor of thymidine nucleotides and it decreases the intracellular concentration of dUTP so that uracil cannot be incorporated into DNA. The chain is Deoxyuridine 5'-triphosphate nucleotidohydrolase from Nautilia profundicola (strain ATCC BAA-1463 / DSM 18972 / AmH).